Consider the following 392-residue polypeptide: Peptidoglycan hydrolase PcsB (392 aa).

The signal sequence occupies residues 1-27 (MKKKILASLLLSTVMVSQVAVLTTAHA). Coiled-coil stretches lie at residues 34 to 96 (IAAQ…LSKN) and 191 to 227 (TKQA…AEAE). The interacts with large extracellular loop of FtsX stretch occupies residues 47–267 (QQQEAQKQVD…TAQVQAVSES (221 aa)). In terms of domain architecture, Peptidase C51 spans 267-390 (SAAAPVRAKV…TSEGFVTYIY (124 aa)).

Homodimer. Interacts (via N-terminal coiled coil domain) with FtsX (via large extracellular loop). This interaction directs PcsB to equatorial and septal sites of dividing cells. Interacts with FtsE.

The protein localises to the cell membrane. It localises to the cell septum. The protein resides in the secreted. Lacks peptidoglycan-hydrolase activity in vitro, probably due to auto-inhibition by the CC domain. In the homodimer, interaction between the CC domain in one monomer and the hydrolase active site in the peptidase C51/CHAP domain in the other monomer probably mediates auto-inhibition of the hydrolase activity. Its function is as follows. Peptidoglycan-hydrolase activity. Required in maintaining normal growth and cellular morphology. Involved in splitting of the septum during cell division. This is Peptidoglycan hydrolase PcsB from Streptococcus pneumoniae serotype 2 (strain D39 / NCTC 7466).